The primary structure comprises 402 residues: MSRVSQARNLGKYFLLIDNMLVVLGFFVVFPLISIRFIDQMGWAAVMVGIALGLRQFIQQGLGIFGGAIADRFGAKPMIVTGMLMRAAGFATMGIAHEPWLLWFSCFLSGLGGTLFDPPRSALVVKLIRPEQRGRFFSLLMMQDSAGAVIGALLGSWLLQYDFRLVCATGAILFILCALFNAWLLPAWKLSTVRTPVREGMRRVMSDKRFVTYVLTLAGYYMLAVQVMLMLPIMVNDIAGSPAAVKWMYAIEACLSLTLLYPIARWSEKRFRLEHRLMAGLLVMSLSMIPIGMVGNLQQLFTLICAFYIGSVIAEPARETLSASLADARARGSYMGFSRLGLAIGGAIGYIGGGWLFDMGKALTQPELPWMMLGIIGFITFLALGWQFSHKRTPRRMLEPGA.

Residues 1–12 (MSRVSQARNLGK) lie on the Cytoplasmic side of the membrane. The chain crosses the membrane as a helical span at residues 13 to 33 (YFLLIDNMLVVLGFFVVFPLI). Residues 34–98 (SIRFIDQMGW…GFATMGIAHE (65 aa)) are Periplasmic-facing. A helical membrane pass occupies residues 99–116 (PWLLWFSCFLSGLGGTLF). The Cytoplasmic segment spans residues 117–138 (DPPRSALVVKLIRPEQRGRFFS). Residues 139–159 (LLMMQDSAGAVIGALLGSWLL) traverse the membrane as a helical segment. The Periplasmic portion of the chain corresponds to 160 to 164 (QYDFR). Residues 165–185 (LVCATGAILFILCALFNAWLL) form a helical membrane-spanning segment. Residues 186–213 (PAWKLSTVRTPVREGMRRVMSDKRFVTY) lie on the Cytoplasmic side of the membrane. Residues 214–234 (VLTLAGYYMLAVQVMLMLPIM) form a helical membrane-spanning segment. Over 235–243 (VNDIAGSPA) the chain is Periplasmic. The chain crosses the membrane as a helical span at residues 244-264 (AVKWMYAIEACLSLTLLYPIA). Residues 265 to 276 (RWSEKRFRLEHR) lie on the Cytoplasmic side of the membrane. Residues 277–297 (LMAGLLVMSLSMIPIGMVGNL) form a helical membrane-spanning segment. Residues 298–299 (QQ) are Periplasmic-facing. Residues 300-320 (LFTLICAFYIGSVIAEPARET) traverse the membrane as a helical segment. Residues 321 to 339 (LSASLADARARGSYMGFSR) are Cytoplasmic-facing. The chain crosses the membrane as a helical span at residues 340-360 (LGLAIGGAIGYIGGGWLFDMG). The Periplasmic portion of the chain corresponds to 361-367 (KALTQPE). A helical transmembrane segment spans residues 368–388 (LPWMMLGIIGFITFLALGWQF). Topologically, residues 389-402 (SHKRTPRRMLEPGA) are cytoplasmic.

It belongs to the major facilitator superfamily. DHA1 family. MdtH (TC 2.A.1.2.21) subfamily.

Its subcellular location is the cell inner membrane. The chain is Multidrug resistance protein MdtH from Salmonella paratyphi C (strain RKS4594).